Here is a 445-residue protein sequence, read N- to C-terminus: 3-phosphoshikimate 1-carboxyvinyltransferase (445 aa).

The 3-phosphoshikimate site is built by K28, S29, and R33. A phosphoenolpyruvate-binding site is contributed by K28. Residues G101 and R129 each coordinate phosphoenolpyruvate. 4 residues coordinate 3-phosphoshikimate: S175, Q177, D328, and K355. Residue Q177 coordinates phosphoenolpyruvate. The Proton acceptor role is filled by D328. Positions 359 and 402 each coordinate phosphoenolpyruvate.

Belongs to the EPSP synthase family. As to quaternary structure, monomer.

The protein resides in the cytoplasm. It carries out the reaction 3-phosphoshikimate + phosphoenolpyruvate = 5-O-(1-carboxyvinyl)-3-phosphoshikimate + phosphate. Its pathway is metabolic intermediate biosynthesis; chorismate biosynthesis; chorismate from D-erythrose 4-phosphate and phosphoenolpyruvate: step 6/7. Functionally, catalyzes the transfer of the enolpyruvyl moiety of phosphoenolpyruvate (PEP) to the 5-hydroxyl of shikimate-3-phosphate (S3P) to produce enolpyruvyl shikimate-3-phosphate and inorganic phosphate. The polypeptide is 3-phosphoshikimate 1-carboxyvinyltransferase (Rhodopseudomonas palustris (strain BisA53)).